The following is a 77-amino-acid chain: Large ribosomal subunit protein bL28 (77 aa).

The tract at residues 1-20 (MSRVCQVTGKGPVTGNNISH) is disordered.

It belongs to the bacterial ribosomal protein bL28 family.

This chain is Large ribosomal subunit protein bL28, found in Pseudomonas fluorescens (strain SBW25).